The sequence spans 861 residues: Integrator complex subunit 6-like (861 aa).

One can recognise a VWFA domain in the interval 3-227; sequence ILLFLIDTSA…QCLESLVQKV (225 aa). Positions 605–626 are disordered; that stretch reads PQNKVKRPGEPNSPMSSKRRRS. The residue at position 617 (serine 617) is a Phosphoserine.

In Homo sapiens (Human), this protein is Integrator complex subunit 6-like (INTS6L).